The primary structure comprises 75 residues: RNA-binding protein KhpA (75 aa).

A KH domain is found at 29–75; it reads SIIIELKVAPEDMGKVIGKQGRIAQAIRTLVKAAALKEKKRVIVEII.

It belongs to the KhpA RNA-binding protein family. Forms a complex with KhpB.

It is found in the cytoplasm. Functionally, a probable RNA chaperone. Forms a complex with KhpB which binds to cellular RNA and controls its expression. Plays a role in peptidoglycan (PG) homeostasis and cell length regulation. In Caldanaerobacter subterraneus subsp. tengcongensis (strain DSM 15242 / JCM 11007 / NBRC 100824 / MB4) (Thermoanaerobacter tengcongensis), this protein is RNA-binding protein KhpA.